Here is a 391-residue protein sequence, read N- to C-terminus: Glycosyltransferase afumC (391 aa).

It belongs to the afumC glycosyltransferase family.

Its pathway is secondary metabolite biosynthesis. Its activity is regulated as follows. Activity is significantly decreased by addition of divalent cations such as Mg(2+), Mn(2+), Zn(2+), Ca(2+), Co(2+), Cu(2+), and Ni(2+); while Fe(2+) has little effect. Functionally, glycosyltransferase; part of the gene cluster that mediates the biosynthesis fumihopaside A, a hopane-type glucoside that enhances the thermotolerance and UV resistance of N.fumigata. The first step of fumihopaside A biosynthesis is performed by the squalene hopane cyclase afumA that catalyzes the cyclization of 3S-oxidosqualene into the hopene 21-beta-H-hopane-3-beta,22-diol. The cytochrome P450 monooxygenase afumB is responsible for both hydroxylation at C-24 and oxidations at C-30 of the afumA product. The glycosyltransferase afumC then catalyzes the glycosylation at C-24, using UDP-D-glucose as a donor, to produce fumihopaside A. AfumC is also able to accept UDP-D-galactose and UDP-D-glucuronic acid as donors to yield minor derivatives. Fumihopaside B, another minor derivative produced, is different from fumihopaside A due to the presence of a double bond between C-22 and C-29. This is Glycosyltransferase afumC from Aspergillus fumigatus (strain CBS 144.89 / FGSC A1163 / CEA10) (Neosartorya fumigata).